The following is a 103-amino-acid chain: Small ribosomal subunit protein uS10 (103 aa).

Belongs to the universal ribosomal protein uS10 family. As to quaternary structure, part of the 30S ribosomal subunit.

Functionally, involved in the binding of tRNA to the ribosomes. The protein is Small ribosomal subunit protein uS10 of Buchnera aphidicola subsp. Cinara cedri (strain Cc).